Reading from the N-terminus, the 684-residue chain is UvrABC system protein B (684 aa).

The Helicase ATP-binding domain occupies D32–R420. Residue G45 to T52 participates in ATP binding. A Beta-hairpin motif is present at residues Y98–I121. Residues Q437 to L603 enclose the Helicase C-terminal domain. The region spanning M643–R678 is the UVR domain.

The protein belongs to the UvrB family. As to quaternary structure, forms a heterotetramer with UvrA during the search for lesions. Interacts with UvrC in an incision complex.

It localises to the cytoplasm. In terms of biological role, the UvrABC repair system catalyzes the recognition and processing of DNA lesions. A damage recognition complex composed of 2 UvrA and 2 UvrB subunits scans DNA for abnormalities. Upon binding of the UvrA(2)B(2) complex to a putative damaged site, the DNA wraps around one UvrB monomer. DNA wrap is dependent on ATP binding by UvrB and probably causes local melting of the DNA helix, facilitating insertion of UvrB beta-hairpin between the DNA strands. Then UvrB probes one DNA strand for the presence of a lesion. If a lesion is found the UvrA subunits dissociate and the UvrB-DNA preincision complex is formed. This complex is subsequently bound by UvrC and the second UvrB is released. If no lesion is found, the DNA wraps around the other UvrB subunit that will check the other stand for damage. This chain is UvrABC system protein B, found in Chlorobaculum tepidum (strain ATCC 49652 / DSM 12025 / NBRC 103806 / TLS) (Chlorobium tepidum).